We begin with the raw amino-acid sequence, 317 residues long: Cytochrome f (317 aa).

An N-terminal signal peptide occupies residues 1–34; it reads MKGLKNQIMKKTSLFICTLLFILSIVFYPKITFA. 4 residues coordinate heme: Tyr35, Cys55, Cys58, and His59. A helical transmembrane segment spans residues 284–304; it reads VIGLIAFFIGVGLTQILLVLK.

It belongs to the cytochrome f family. As to quaternary structure, the 4 large subunits of the cytochrome b6-f complex are cytochrome b6, subunit IV (17 kDa polypeptide, PetD), cytochrome f and the Rieske protein, while the 4 small subunits are PetG, PetL, PetM and PetN. The complex functions as a dimer. Heme is required as a cofactor.

It is found in the cellular thylakoid membrane. Component of the cytochrome b6-f complex, which mediates electron transfer between photosystem II (PSII) and photosystem I (PSI), cyclic electron flow around PSI, and state transitions. The sequence is that of Cytochrome f from Prochlorococcus marinus (strain MIT 9215).